The chain runs to 428 residues: L-lysine N6-monooxygenase MbtG (428 aa).

A signal peptide spans 1 to 20 (MSTLAILGAGAKAVAVAAKA).

Belongs to the lysine N(6)-hydroxylase/L-ornithine N(5)-oxygenase family. Requires FAD as cofactor.

It catalyses the reaction L-lysine + NADPH + O2 = N(6)-hydroxy-L-lysine + NADP(+) + H2O. It functions in the pathway siderophore biosynthesis; mycobactin biosynthesis. Flavoprotein monooxygenase required for N-hydroxylation of the two acylated lysine residues during mycobactin assembly, thus producing the hydroxamate groups necessary for iron sequestration. Is also able, but less efficiently, to hydroxylate L-lysine (non acylated) in vitro. The sequence is that of L-lysine N6-monooxygenase MbtG (mbtG) from Mycolicibacterium paratuberculosis (strain ATCC BAA-968 / K-10) (Mycobacterium paratuberculosis).